The following is a 267-amino-acid chain: L-aspartate dehydrogenase 2 (267 aa).

NAD(+)-binding residues include Ala-123 and Asn-189. His-219 is an active-site residue.

This sequence belongs to the L-aspartate dehydrogenase family.

The catalysed reaction is L-aspartate + NADP(+) + H2O = oxaloacetate + NH4(+) + NADPH + H(+). It carries out the reaction L-aspartate + NAD(+) + H2O = oxaloacetate + NH4(+) + NADH + H(+). It functions in the pathway cofactor biosynthesis; NAD(+) biosynthesis; iminoaspartate from L-aspartate (dehydrogenase route): step 1/1. Specifically catalyzes the NAD or NADP-dependent dehydrogenation of L-aspartate to iminoaspartate. The chain is L-aspartate dehydrogenase 2 from Bordetella pertussis (strain Tohama I / ATCC BAA-589 / NCTC 13251).